The sequence spans 321 residues: D-alanine--D-alanine ligase (321 aa).

Positions 121-315 (RSWFLTNNIN…FVNLIEEILK (195 aa)) constitute an ATP-grasp domain. ATP is bound at residue 148–199 (IKRPYVIKPFTQGSSIGVEVIFEEDDFNFANYDFPYGDEVIIEKYIKGRELQ). Positions 268, 282, and 284 each coordinate Mg(2+).

Belongs to the D-alanine--D-alanine ligase family. It depends on Mg(2+) as a cofactor. Requires Mn(2+) as cofactor.

It is found in the cytoplasm. It carries out the reaction 2 D-alanine + ATP = D-alanyl-D-alanine + ADP + phosphate + H(+). It participates in cell wall biogenesis; peptidoglycan biosynthesis. Functionally, cell wall formation. This Rickettsia bellii (strain RML369-C) protein is D-alanine--D-alanine ligase.